The sequence spans 110 residues: NAD(P)H-quinone oxidoreductase subunit M (110 aa).

Belongs to the complex I NdhM subunit family. In terms of assembly, NDH-1 can be composed of about 15 different subunits; different subcomplexes with different compositions have been identified which probably have different functions.

Its subcellular location is the cellular thylakoid membrane. The enzyme catalyses a plastoquinone + NADH + (n+1) H(+)(in) = a plastoquinol + NAD(+) + n H(+)(out). The catalysed reaction is a plastoquinone + NADPH + (n+1) H(+)(in) = a plastoquinol + NADP(+) + n H(+)(out). Functionally, NDH-1 shuttles electrons from an unknown electron donor, via FMN and iron-sulfur (Fe-S) centers, to quinones in the respiratory and/or the photosynthetic chain. The immediate electron acceptor for the enzyme in this species is believed to be plastoquinone. Couples the redox reaction to proton translocation, and thus conserves the redox energy in a proton gradient. Cyanobacterial NDH-1 also plays a role in inorganic carbon-concentration. The protein is NAD(P)H-quinone oxidoreductase subunit M of Synechococcus elongatus (strain ATCC 33912 / PCC 7942 / FACHB-805) (Anacystis nidulans R2).